The following is a 577-amino-acid chain: Proline--tRNA ligase (577 aa).

The protein belongs to the class-II aminoacyl-tRNA synthetase family. ProS type 1 subfamily. In terms of assembly, homodimer.

Its subcellular location is the cytoplasm. It catalyses the reaction tRNA(Pro) + L-proline + ATP = L-prolyl-tRNA(Pro) + AMP + diphosphate. Functionally, catalyzes the attachment of proline to tRNA(Pro) in a two-step reaction: proline is first activated by ATP to form Pro-AMP and then transferred to the acceptor end of tRNA(Pro). As ProRS can inadvertently accommodate and process non-cognate amino acids such as alanine and cysteine, to avoid such errors it has two additional distinct editing activities against alanine. One activity is designated as 'pretransfer' editing and involves the tRNA(Pro)-independent hydrolysis of activated Ala-AMP. The other activity is designated 'posttransfer' editing and involves deacylation of mischarged Ala-tRNA(Pro). The misacylated Cys-tRNA(Pro) is not edited by ProRS. This is Proline--tRNA ligase from Marinobacter nauticus (strain ATCC 700491 / DSM 11845 / VT8) (Marinobacter aquaeolei).